A 775-amino-acid chain; its full sequence is MSKSKSSESVKVVVRCRPMNEKERVANFNRVVSVDVKLGQVAVCNPRGASSHEHPKVFTFDSVYDWNSKQMELYDETFRPLVDSVLFGFNGTIFAYGQTGTGKTYTMEGVRNDPERRGVIPNSFEHIFTHISRSQNQQYLVRASYLEIYQEEIRDLLSKDQARRLELKERPDTGVYVKDLSSFVTKSVREIEHVMNVGNQNRSVGATNMNEHSSRSHAIFVITIECSELGPDGENHIRVGKLNLVDLAGSERQTKTGAQGERLKEATKINLSLSALGNVISALVDGRSTHIPYRDSKLTRLLQDSLGGNARTVMVANIGPASYNVEETLTTLRYANRAKNIKNKPRVNEDPKDALLREFQEEIARLKEQLEKRSGRKRRRRRRRRVGEGGEEFEDGEDEEDDDDDDEDEEEGVDADKNIADYWHEQQEKLEKERRAIMEDHSLVAEEKQRLLKEKERKMTDLHKEKEASEMLTAKVKAMESKLLVGGKNIVDHTNEQQKVLELKRQEIAEQKRREREMKQEMECRDEETLELKETYSSLQQEVDIKTKKLKKLFSKLQSVKSEIQDAQDEHVKYRQELEQTQNELTRELKLKHLIIENFIPMEEKNKIVTRATFDEEDDLWKMTPITRIQNSDHQMMKRPVSAVGYRRPLSQHARMAMLMRPDVRYKAENILLLELDLPSRTTKDYEGPVIAPKVAAALEDALREEDEIQVDASGFHASLGSSPGLSASAAGFSKKPKSGRPKTGKKVSTPTSAHSPLSGSGSPLYPQSRGLVPK.

The 333-residue stretch at 9–341 (SVKVVVRCRP…LRYANRAKNI (333 aa)) folds into the Kinesin motor domain. Residue 97 to 104 (GQTGTGKT) coordinates ATP. The tract at residues 372 to 419 (KRSGRKRRRRRRRRVGEGGEEFEDGEDEEDDDDDDEDEEEGVDADKNI) is disordered. Over residues 374–385 (SGRKRRRRRRRR) the composition is skewed to basic residues. The segment covering 389 to 413 (GGEEFEDGEDEEDDDDDDEDEEEGV) has biased composition (acidic residues). Positions 501–591 (LELKRQEIAE…QNELTRELKL (91 aa)) form a coiled coil. The tract at residues 716–775 (FHASLGSSPGLSASAAGFSKKPKSGRPKTGKKVSTPTSAHSPLSGSGSPLYPQSRGLVPK) is disordered. A compositionally biased stretch (low complexity) spans 718–734 (ASLGSSPGLSASAAGFS). The segment covering 735-746 (KKPKSGRPKTGK) has biased composition (basic residues). A compositionally biased stretch (low complexity) spans 756-765 (SPLSGSGSPL).

It belongs to the TRAFAC class myosin-kinesin ATPase superfamily. Kinesin family. In terms of assembly, heterodimer of KIF3A and KIF3B. KIF3A/KIF3B heterodimer interacts with KIFAP3 forming a heterotrimeric (KIF3A/KIF3B/KIFAP3) complex.

It is found in the cytoplasm. The protein resides in the cytoskeleton. Its subcellular location is the cell projection. It localises to the cilium. The protein localises to the dendritic spine. Microtubule-based molecular motor that transport intracellular cargos, such as vesicles, organelles and protein complexes. Uses ATP hydrolysis to generate force to bind and move along the microtubule. Plays a role in cilia formation. Required for photoreceptor development. This Danio rerio (Zebrafish) protein is Kinesin-like protein KIF3B.